The chain runs to 488 residues: MRESFLDTIQHHFGHDPVWILVVGDLMLDRYLFGDVQRISPEAPVPVVLLKSQDERAGGAANVAANLAGLGIKTRIAGVIGQDAEAETLLGLMHDIGADTQHIHCSACRPTITKTRILGGHQQMMRLDQEDAAALSAEEQLALQTAIAAALTDRPAAIILSDYAKGVLSETLCQSIIAQATASGIPVLVDPKGRDYSKYHGATGLTPNKRETAEACHVAPHDDQALLAAAEQLRHTLKLDFLAVTRGEEGITVLDRQGSAHLAATARQVYDVSGAGDTVIATLTAGLAHGLPLHDAIELANIAAGIVVGKVGTVPINKAELEQELQSQQSAAQADKVCNLDSLLARVQNWRHQGERIVFTNGCFDLLHAGHVTYLEAARNTGDRLVLGLNTDRSVSALKGPSRPVIHEQDRARVLAALESVDAVILFDEDTPIDLINAIRPDVIAKGSDYTEDQVVGGAEVKSWGGKVALIDVVPGRSTSNIIRKLAS.

The segment at 1–332 (MRESFLDTIQ…QELQSQQSAA (332 aa)) is ribokinase. 208-211 (NKRE) contributes to the ATP binding site. Asp277 is an active-site residue. Residues 359–488 (FTNGCFDLLH…TSNIIRKLAS (130 aa)) form a cytidylyltransferase region.

In the N-terminal section; belongs to the carbohydrate kinase PfkB family. This sequence in the C-terminal section; belongs to the cytidylyltransferase family. Homodimer.

The catalysed reaction is D-glycero-beta-D-manno-heptose 7-phosphate + ATP = D-glycero-beta-D-manno-heptose 1,7-bisphosphate + ADP + H(+). It catalyses the reaction D-glycero-beta-D-manno-heptose 1-phosphate + ATP + H(+) = ADP-D-glycero-beta-D-manno-heptose + diphosphate. It participates in nucleotide-sugar biosynthesis; ADP-L-glycero-beta-D-manno-heptose biosynthesis; ADP-L-glycero-beta-D-manno-heptose from D-glycero-beta-D-manno-heptose 7-phosphate: step 1/4. The protein operates within nucleotide-sugar biosynthesis; ADP-L-glycero-beta-D-manno-heptose biosynthesis; ADP-L-glycero-beta-D-manno-heptose from D-glycero-beta-D-manno-heptose 7-phosphate: step 3/4. In terms of biological role, catalyzes the phosphorylation of D-glycero-D-manno-heptose 7-phosphate at the C-1 position to selectively form D-glycero-beta-D-manno-heptose-1,7-bisphosphate. Functionally, catalyzes the ADP transfer from ATP to D-glycero-beta-D-manno-heptose 1-phosphate, yielding ADP-D-glycero-beta-D-manno-heptose. The sequence is that of Bifunctional protein HldE from Methylobacillus flagellatus (strain ATCC 51484 / DSM 6875 / VKM B-1610 / KT).